The following is a 338-amino-acid chain: Fructose-1,6-bisphosphatase class 1 (338 aa).

Mg(2+) contacts are provided by Glu-94, Asp-116, Leu-118, and Asp-119. Substrate-binding positions include 119 to 122, Asn-210, and Lys-276; that span reads DGSS. Glu-282 contributes to the Mg(2+) binding site.

The protein belongs to the FBPase class 1 family. As to quaternary structure, homotetramer. It depends on Mg(2+) as a cofactor.

It is found in the cytoplasm. The enzyme catalyses beta-D-fructose 1,6-bisphosphate + H2O = beta-D-fructose 6-phosphate + phosphate. It functions in the pathway carbohydrate biosynthesis; gluconeogenesis. The protein is Fructose-1,6-bisphosphatase class 1 of Burkholderia thailandensis (strain ATCC 700388 / DSM 13276 / CCUG 48851 / CIP 106301 / E264).